Here is an 892-residue protein sequence, read N- to C-terminus: DNA mismatch repair protein MutS (892 aa).

607–614 (GPNMSGKS) serves as a coordination point for ATP. The disordered stretch occupies residues 826-854 (ETKAETEEESQLSFFGGEQSSKKQDKPVL). Over residues 845 to 854 (SSKKQDKPVL) the composition is skewed to basic and acidic residues.

The protein belongs to the DNA mismatch repair MutS family.

Functionally, this protein is involved in the repair of mismatches in DNA. It is possible that it carries out the mismatch recognition step. This protein has a weak ATPase activity. The polypeptide is DNA mismatch repair protein MutS (Bacillus cereus (strain AH187)).